The chain runs to 656 residues: PAN2-PAN3 deadenylation complex subunit PAN3 (656 aa).

The C3H1-type zinc-finger motif lies at 15–44 (SFKGTQCRNIIIHGYCKFENEGCQFNHGNS). Residues 71–104 (KTSSSFTPGKSPAVRSPDFSSLPAFQPGAPVNDQ) form a disordered region. The PABPC-interacting motif-2 (PAM-2) signature appears at 128–148 (AFAPSFNPYASESFTPSVSAG). Residues 271-525 (QVFPRGSLPD…NIEDFTKLFS (255 aa)) form a pseudokinase domain region. ATP is bound by residues Arg325, 375 to 382 (DYYPQSQS), and 428 to 429 (KK). Residues 526–564 (HKVLSVVNSLQYNSEYLEQQLSRELENARLFRLMCKLNA) are a coiled coil. The segment at 565-656 (IYGRLESRID…IDSTFRALTQ (92 aa)) is knob domain.

This sequence belongs to the protein kinase superfamily. PAN3 family. As to quaternary structure, homodimer. Forms a heterotrimer with a catalytic subunit PAN2 to form the poly(A)-nuclease (PAN) deadenylation complex. Interacts (via PAM-2 motif) with poly(A)-binding protein PAB1 (via PABC domain), conferring substrate specificity of the enzyme complex.

Its subcellular location is the cytoplasm. Regulatory subunit of the poly(A)-nuclease (PAN) deadenylation complex, one of two cytoplasmic mRNA deadenylases involved in mRNA turnover. PAN specifically shortens poly(A) tails of RNA and the activity is stimulated by poly(A)-binding protein PAB1. PAN deadenylation is followed by rapid degradation of the shortened mRNA tails by the CCR4-NOT complex. Deadenylated mRNAs are then degraded by two alternative mechanisms, namely exosome-mediated 3'-5' exonucleolytic degradation, or deadenylation-dependent mRNA decaping and subsequent 5'-3' exonucleolytic degradation by XRN1. May also be involved in post-transcriptional maturation of mRNA poly(A) tails. PAN3 acts as a positive regulator for PAN activity, recruiting the catalytic subunit PAN2 to mRNA via its interaction with RNA and with PAB1. In Kluyveromyces lactis (strain ATCC 8585 / CBS 2359 / DSM 70799 / NBRC 1267 / NRRL Y-1140 / WM37) (Yeast), this protein is PAN2-PAN3 deadenylation complex subunit PAN3.